A 138-amino-acid chain; its full sequence is Histone H2A.Z (138 aa).

Over residues methionine 1–glycine 10 the composition is skewed to gly residues. Residues methionine 1 to valine 21 form a disordered region. 2 positions are modified to N6-acetyllysine: lysine 4 and lysine 9.

Belongs to the histone H2A family. The nucleosome is a histone octamer containing two molecules each of H2A, H2B, H3 and H4 assembled in one H3-H4 heterotetramer and two H2A-H2B heterodimers. The octamer wraps approximately 147 bp of DNA. H2A or its variant H2A.Z forms a heterodimer with H2B. H2A.Z associates with the VPS72/SWC2 subunit of the SWR1 chromatin remodeling complex. Also interacts with RBP1/DNA-directed RNA polymerase II largest subunit. In terms of processing, acetylated once deposited into chromatin.

It localises to the nucleus. Its subcellular location is the chromosome. In terms of biological role, variant histone H2A which can replace H2A in some nucleosomes. Nucleosomes wrap and compact DNA into chromatin, limiting DNA accessibility to the cellular machineries which require DNA as a template. Histones thereby play a central role in transcription regulation, DNA repair, DNA replication and chromosomal stability. DNA accessibility is regulated via a complex set of post-translational modifications of histones, also called histone code, and nucleosome remodeling. This variant is enriched at promoters, it may keep them in a repressed state until the appropriate activation signal is received. Near telomeres, it may counteract gene silencing caused by the spread of heterochromatin proteins. Required for the RNA polymerase II and SPT15/TBP recruitment to the target genes. Involved in chromosome stability. This Cryptococcus neoformans var. neoformans serotype D (strain B-3501A) (Filobasidiella neoformans) protein is Histone H2A.Z (HTZ1).